A 333-amino-acid chain; its full sequence is uncharacterized protein (333 aa).

This sequence to E.coli YfeH.

This is an uncharacterized protein from Pseudomonas aeruginosa (strain ATCC 15692 / DSM 22644 / CIP 104116 / JCM 14847 / LMG 12228 / 1C / PRS 101 / PAO1).